Consider the following 499-residue polypeptide: Putative sperm motility kinase W (499 aa).

The region spanning 14-262 (YKVLFTLGHG…IEDIERHPWV (249 aa)) is the Protein kinase domain. ATP contacts are provided by residues 20-28 (LGHGSFGTV) and Lys43. The active-site Proton acceptor is Asp133. One can recognise a UBA domain in the interval 274-314 (DPDYNIIEMLCGMGFDANEILESLQRKKYNESMGAYLILKA).

The protein belongs to the protein kinase superfamily. CAMK Ser/Thr protein kinase family. Smok subfamily.

It catalyses the reaction L-seryl-[protein] + ATP = O-phospho-L-seryl-[protein] + ADP + H(+). The enzyme catalyses L-threonyl-[protein] + ATP = O-phospho-L-threonyl-[protein] + ADP + H(+). May play a role in sperm motility, especially in the regulation of flagellar function. The polypeptide is Putative sperm motility kinase W (Mus musculus (Mouse)).